The chain runs to 239 residues: MVIKAQSPAGFAEEYIIESIWNNRFPPGSILPAERELSELIGVTRTTLREVLQRLARDGWLTIQHGKPTKVNNFWETSGLNILETLARLDHESVPQLIDNLLSVRTNIATIFIRTALRMHPERAREVLATADEVEDHADAFAELDYNIFRGLAFASGNPIYGLILNGMKGLYTRIGRHYFSNPEARSLALGFYHKLGTLSREGLHDQVYDVVRTYGRESGEIWHRMQKNLPGDLAMHSR.

The region spanning 6 to 74 (QSPAGFAEEY…HGKPTKVNNF (69 aa)) is the HTH gntR-type domain. The H-T-H motif DNA-binding region spans 34-53 (ERELSELIGVTRTTLREVLQ).

In terms of assembly, homodimer.

It is found in the cytoplasm. Its function is as follows. Multifunctional regulator of fatty acid metabolism. The chain is Fatty acid metabolism regulator protein from Cronobacter sakazakii (strain ATCC BAA-894) (Enterobacter sakazakii).